A 194-amino-acid polypeptide reads, in one-letter code: H-N-H endonuclease F-TflI (194 aa).

Its function is as follows. Endonuclease that cleaves only one strand of asymmetric DNA substrates thereby introducing interruptions into the template or coding strand. The chain is H-N-H endonuclease F-TflI from Escherichia coli (Enterobacteria phage T5).